Reading from the N-terminus, the 33-residue chain is Photosystem II reaction center protein Psb30 (33 aa).

Residues 5–25 form a helical membrane-spanning segment; that stretch reads ILSQLIAIAVTLFLGPVVVIL.

This sequence belongs to the Psb30/Ycf12 family. PSII is composed of 1 copy each of membrane proteins PsbA, PsbB, PsbC, PsbD, PsbE, PsbF, PsbH, PsbI, PsbJ, PsbK, PsbL, PsbM, PsbT, PsbX, PsbY, PsbZ, Psb30/Ycf12, peripheral proteins of the oxygen-evolving complex and a large number of cofactors. It forms dimeric complexes.

Its subcellular location is the plastid. The protein resides in the chloroplast thylakoid membrane. A core subunit of photosystem II (PSII), probably helps stabilize the reaction center. The protein is Photosystem II reaction center protein Psb30 of Oedogonium cardiacum (Filamentous green alga).